A 284-amino-acid polypeptide reads, in one-letter code: NADH-cytochrome b5 reductase 1 (284 aa).

Residues 7–27 (KLVVVIVIVVVPLLFKFIIGP) form a helical membrane-spanning segment. The 105-residue stretch at 38 to 142 (NDFQSFPLVE…KGPRGNYHYE (105 aa)) folds into the FAD-binding FR-type domain. 148–180 (HLGMIAGGTGIAPMYQIMKAIAMDSHDTTKVSL) provides a ligand contact to FAD.

This sequence belongs to the flavoprotein pyridine nucleotide cytochrome reductase family. As to quaternary structure, monomer. Component of the 2-(3-amino-3-carboxypropyl)histidine synthase complex composed of DPH1, DPH2, KTI11/DPH3 and a NADH-dependent reductase, predominantly CBR1. Interacts with KTI11/DPH3. Interacts with STE20. FAD is required as a cofactor.

The protein resides in the mitochondrion outer membrane. The catalysed reaction is 2 Fe(III)-[cytochrome b5] + NADH = 2 Fe(II)-[cytochrome b5] + NAD(+) + H(+). The enzyme catalyses 2 Fe(3+)-[Dph3] + NADH = 2 Fe(2+)-[Dph3] + NAD(+) + H(+). It participates in protein modification; peptidyl-diphthamide biosynthesis. With respect to regulation, competitively inhibited by NAD(+). Inhibited by mercurials such as p-chloromercuribenzoate (PCMB) and HgCl(2). Enzymatic activity increases under anaerobic conditions. Functionally, NADH-dependent reductase for KTI11/DPH3 and cytochrome b5. Required for the first step of diphthamide biosynthesis, a post-translational modification of histidine which occurs in elongation factor 2. DPH1 and DPH2 transfer a 3-amino-3-carboxypropyl (ACP) group from S-adenosyl-L-methionine (SAM) to a histidine residue, the reaction is assisted by a reduction system comprising KTI11/DPH3 and a NADH-dependent reductase, predominantly CBR1. By reducing KTI11/DPH3, also involved in the formation of the tRNA wobble base modification mcm5s 2U (5-methoxycarbonylmethyl-2-thiouridine), mediated by the elongator complex. The cytochrome b5/NADH cytochrome b5 reductase electron transfer system supports the catalytic activity of several sterol biosynthetic enzymes. Plays a role in bud morphology. The chain is NADH-cytochrome b5 reductase 1 (CBR1) from Saccharomyces cerevisiae (strain YJM789) (Baker's yeast).